A 494-amino-acid chain; its full sequence is Aspartyl/glutamyl-tRNA(Asn/Gln) amidotransferase subunit B (494 aa).

It belongs to the GatB/GatE family. GatB subfamily. As to quaternary structure, heterotrimer of A, B and C subunits.

It catalyses the reaction L-glutamyl-tRNA(Gln) + L-glutamine + ATP + H2O = L-glutaminyl-tRNA(Gln) + L-glutamate + ADP + phosphate + H(+). The enzyme catalyses L-aspartyl-tRNA(Asn) + L-glutamine + ATP + H2O = L-asparaginyl-tRNA(Asn) + L-glutamate + ADP + phosphate + 2 H(+). In terms of biological role, allows the formation of correctly charged Asn-tRNA(Asn) or Gln-tRNA(Gln) through the transamidation of misacylated Asp-tRNA(Asn) or Glu-tRNA(Gln) in organisms which lack either or both of asparaginyl-tRNA or glutaminyl-tRNA synthetases. The reaction takes place in the presence of glutamine and ATP through an activated phospho-Asp-tRNA(Asn) or phospho-Glu-tRNA(Gln). The chain is Aspartyl/glutamyl-tRNA(Asn/Gln) amidotransferase subunit B from Rhodopseudomonas palustris (strain BisB5).